Here is a 307-residue protein sequence, read N- to C-terminus: Aspartate carbamoyltransferase catalytic subunit (307 aa).

2 residues coordinate carbamoyl phosphate: Arg-56 and Thr-57. Lys-84 is a binding site for L-aspartate. Arg-106, His-136, and Gln-139 together coordinate carbamoyl phosphate. Arg-169 and Arg-221 together coordinate L-aspartate. Carbamoyl phosphate-binding residues include Ala-262 and Pro-263.

Belongs to the aspartate/ornithine carbamoyltransferase superfamily. ATCase family. In terms of assembly, heterododecamer (2C3:3R2) of six catalytic PyrB chains organized as two trimers (C3), and six regulatory PyrI chains organized as three dimers (R2).

The catalysed reaction is carbamoyl phosphate + L-aspartate = N-carbamoyl-L-aspartate + phosphate + H(+). The protein operates within pyrimidine metabolism; UMP biosynthesis via de novo pathway; (S)-dihydroorotate from bicarbonate: step 2/3. Its function is as follows. Catalyzes the condensation of carbamoyl phosphate and aspartate to form carbamoyl aspartate and inorganic phosphate, the committed step in the de novo pyrimidine nucleotide biosynthesis pathway. This Streptococcus pneumoniae serotype 2 (strain D39 / NCTC 7466) protein is Aspartate carbamoyltransferase catalytic subunit.